Consider the following 145-residue polypeptide: Bacilliredoxin SAR1592 (145 aa).

The protein belongs to the bacilliredoxin family.

This Staphylococcus aureus (strain MRSA252) protein is Bacilliredoxin SAR1592.